The sequence spans 336 residues: DNA repair protein RAD51 homolog A (336 aa).

In terms of domain architecture, HhH spans 45-74 (TVEAVAYAPKKELLNIKGISEAKAEKILAE). Residue 124-131 (GEFRTGKT) participates in ATP binding. The short motif at 242–257 (LARFLRMLLRLADEFG) is the Nuclear export signal element.

Belongs to the RecA family. RAD51 subfamily. As to quaternary structure, forms linear homooligomers, giving rise to a RAD51 nucleoprotein filament, which is essential for strand-pairing reactions during DNA recombination.

The protein localises to the nucleus. Its subcellular location is the cytoplasm. It is found in the chromosome. Plays an important role in homologous strand exchange, a key step in DNA repair through homologous recombination (HR). Binds to single-stranded DNA in an ATP-dependent manner to form nucleoprotein filaments which are essential for the homology search and strand exchange. Catalyzes the recognition of homology and strand exchange between homologous DNA partners to form a joint molecule between a processed DNA break and the repair template. Recruited to resolve stalled replication forks during replication stress. Also involved in interstrand cross-link repair. The protein is DNA repair protein RAD51 homolog A (rad51-a) of Xenopus laevis (African clawed frog).